The sequence spans 61 residues: Alpha-conotoxin EIIA (61 aa).

Residues 1-16 (MFIVFLLVVLATTVGS) form the signal peptide. The propeptide occupies 17-40 (FTLDRVLEGRNAAAIDNALDQRDP). A Pyrrolidone carboxylic acid modification is found at glutamine 43. Proline 45 is modified (hydroxyproline). Intrachain disulfides connect cysteine 47–cysteine 53 and cysteine 48–cysteine 58. Cysteine amide is present on cysteine 58.

It belongs to the conotoxin A superfamily. In terms of tissue distribution, expressed by the venom duct.

The protein localises to the secreted. In terms of biological role, alpha-conotoxins bind to the nicotinic acetylcholine receptors (nAChR) and inhibit them. This peptide potently blocks muscular nicotinic acetylcholine receptor (CHRNA1-CHRNB1-CHRNG-CHRND), and has no effect on neuronal receptors. It is able to totally displace [125I]-Bgtx from the Torpedo receptor with a complete inhibition in the high micromolar range. It produces a biphasic inhibition curve which fits nicely with a two-site model (Ki of 0.46 and 105 nM). This Conus ermineus (Agate cone) protein is Alpha-conotoxin EIIA.